Consider the following 605-residue polypeptide: Podocalyxin-like protein 2 (605 aa).

Residues Met-1–Ala-32 form the signal peptide. Over Gly-33 to Thr-500 the chain is Extracellular. The O-linked (Xyl...) (chondroitin sulfate) serine glycan is linked to Ser-79. Sulfotyrosine is present on residues Tyr-97 and Tyr-118. Positions Ser-129 to Ser-134 are O-glycosylated at one site. Residues Ser-129 to Ser-347 form a disordered region. O-linked (GalNAc...) serine glycosylation is present at Ser-144. Over residues Glu-162–Leu-189 the composition is skewed to acidic residues. Asn-193 carries an N-linked (GlcNAc...) asparagine glycan. Positions Ser-207–Ala-217 are enriched in polar residues. Low complexity-rich tracts occupy residues Pro-241–Pro-255 and Glu-288–Gly-298. A glycan (N-linked (GlcNAc...) asparagine) is linked at Asn-395. The helical transmembrane segment at Leu-501–Leu-521 threads the bilayer. At Tyr-522–Leu-605 the chain is on the cytoplasmic side. A disordered region spans residues Leu-554 to Leu-605. Position 570 is a phosphoserine (Ser-570). The segment covering Asn-572–Ser-582 has biased composition (gly residues). The segment covering Glu-594–Leu-605 has biased composition (acidic residues). Ser-596 carries the phosphoserine modification.

Belongs to the podocalyxin family. As to quaternary structure, homodimer; disulfide-linked. Interacts with SELL, SELE and SELP. O-glycosylated; contains chondroitin sulfate. Displays sialylated O-linked oligosaccharides. In terms of processing, sulfation is necessary for interaction with SELL. Sialylated O-linked oligosaccharides are necessary for interaction with SELL, SELE and SELP. As to expression, expressed in T-cells, B-cells and monocytes. Expression is higher on memory and germinal center cells than on naive B-cells (at protein level). Highly expressed in brain. Moderately expressed in pancreas, kidney and lymphoid node. Weakly expressed in liver. Detected in both endothelial cells and CD34+ bone marrow cells.

The protein localises to the membrane. Its function is as follows. Acts as a ligand for vascular selectins. Mediates rapid rolling of leukocytes over vascular surfaces through high affinity divalent cation-dependent interactions with E-, P- and L-selectins. The polypeptide is Podocalyxin-like protein 2 (PODXL2) (Homo sapiens (Human)).